We begin with the raw amino-acid sequence, 354 residues long: Guanine nucleotide-binding protein G(o) subunit alpha (354 aa).

Residue glycine 2 is the site of N-myristoyl glycine attachment. Cysteine 3 carries S-palmitoyl cysteine lipidation. The G-alpha domain maps to 32-354 (KDVKLLLLGA…ANNLRGCGLY (323 aa)). Residues 35–48 (KLLLLGAGESGKST) are G1 motif. Glutamate 43, lysine 46, serine 47, threonine 48, serine 152, leucine 176, arginine 177, threonine 178, and arginine 179 together coordinate GTP. Serine 47 contributes to the Mg(2+) binding site. The tract at residues 174–182 (DILRTRVKT) is G2 motif. Arginine 179 bears the ADP-ribosylarginine; by cholera toxin mark. Threonine 182 is a Mg(2+) binding site. The G3 motif stretch occupies residues 197–206 (FRLFDVGGQR). Glutamine 205 bears the 5-glutamyl histamine mark. Residues 266 to 273 (ILFLNKKD) form a G4 motif region. Residues asparagine 270, aspartate 273, and cysteine 325 each coordinate GTP. The segment at 324 to 329 (TCATDT) is G5 motif. Cysteine 351 carries the S-palmitoyl cysteine lipid modification. At cysteine 351 the chain carries ADP-ribosylcysteine; by pertussis toxin.

This sequence belongs to the G-alpha family. G(i/o/t/z) subfamily. As to quaternary structure, g proteins are composed of 3 units; alpha, beta and gamma. The alpha chain contains the guanine nucleotide binding site. Forms a complex with GNB1 and GNG3. Interacts with RGS14. Interacts with RGS16. Interacts with RGS19. Interacts (when palmitoylated) with ADGRG3. In terms of processing, histaminylated at Gln-205 residues by TGM2. Post-translationally, palmitoylated at Cys-351, leading to binding to ADGRG3.

It localises to the cell membrane. Its subcellular location is the membrane. It catalyses the reaction GTP + H2O = GDP + phosphate + H(+). Its activity is regulated as follows. The GTPase activity is promoted by GTPAse activators, such as RGS14, RGS16 and RGS19. Guanine nucleotide-binding proteins (G proteins) function as transducers downstream of G protein-coupled receptors (GPCRs) in numerous signaling cascades. The alpha chain contains the guanine nucleotide binding site and alternates between an active, GTP-bound state and an inactive, GDP-bound state. Signaling by an activated GPCR promotes GDP release and GTP binding. The alpha subunit has a low GTPase activity that converts bound GTP to GDP, thereby terminating the signal. Both GDP release and GTP hydrolysis are modulated by numerous regulatory proteins. Signaling is mediated via effector proteins, such as adenylate cyclase. Inhibits adenylate cyclase activity, leading to decreased intracellular cAMP levels. This chain is Guanine nucleotide-binding protein G(o) subunit alpha (GNAO1), found in Homo sapiens (Human).